Consider the following 436-residue polypeptide: Na(+)/H(+) antiporter NhaA (436 aa).

Helical transmembrane passes span 14-34 (AGGI…NSTW), 59-79 (LHHW…GLEL), 95-115 (ALPV…YHQF), 125-145 (WGIP…LLAW), 152-172 (IIFL…VIAI), 176-196 (PALH…LLLF), 214-234 (FWYF…FLAF), 300-320 (AIQP…NAGI), 336-356 (IGTC…SSWL), 374-394 (LLGA…IGQL), and 407-427 (LGIL…LFQV).

This sequence belongs to the NhaA Na(+)/H(+) (TC 2.A.33) antiporter family.

Its subcellular location is the cell inner membrane. It carries out the reaction Na(+)(in) + 2 H(+)(out) = Na(+)(out) + 2 H(+)(in). Its function is as follows. Na(+)/H(+) antiporter that extrudes sodium in exchange for external protons. The protein is Na(+)/H(+) antiporter NhaA of Acidithiobacillus ferrooxidans (strain ATCC 23270 / DSM 14882 / CIP 104768 / NCIMB 8455) (Ferrobacillus ferrooxidans (strain ATCC 23270)).